Reading from the N-terminus, the 274-residue chain is Large ribosomal subunit protein uL2 (274 aa).

Disordered regions lie at residues 28-54 (KPFA…TRHI) and 221-274 (RGTA…RSKK). Positions 39–49 (KTGGRNNNGRI) are enriched in polar residues.

The protein belongs to the universal ribosomal protein uL2 family. Part of the 50S ribosomal subunit. Forms a bridge to the 30S subunit in the 70S ribosome.

Functionally, one of the primary rRNA binding proteins. Required for association of the 30S and 50S subunits to form the 70S ribosome, for tRNA binding and peptide bond formation. It has been suggested to have peptidyltransferase activity; this is somewhat controversial. Makes several contacts with the 16S rRNA in the 70S ribosome. The sequence is that of Large ribosomal subunit protein uL2 from Edwardsiella ictaluri (strain 93-146).